The following is a 570-amino-acid chain: Glutamate--tRNA ligase (570 aa).

A 'HIGH' region motif is present at residues 107–117 (PNPDFVLHLGS).

The protein belongs to the class-I aminoacyl-tRNA synthetase family. Glutamate--tRNA ligase type 2 subfamily.

The protein localises to the cytoplasm. The catalysed reaction is tRNA(Glu) + L-glutamate + ATP = L-glutamyl-tRNA(Glu) + AMP + diphosphate. Catalyzes the attachment of glutamate to tRNA(Glu) in a two-step reaction: glutamate is first activated by ATP to form Glu-AMP and then transferred to the acceptor end of tRNA(Glu). The chain is Glutamate--tRNA ligase from Pyrobaculum islandicum (strain DSM 4184 / JCM 9189 / GEO3).